The primary structure comprises 342 residues: Muscleblind-like protein 3 (342 aa).

4 C3H1-type zinc fingers span residues 14–42 (WLTLEVCREFQRGTCSRADAECRFAHPPR), 48–74 (NGRVVACFDSLKGRCTRENCKYLHPPP), 174–202 (TDRLEVCREFQRGNCTRGESECRYAHPTD), and 210–236 (DNSVTICMDYIKGRCSREKCKYFHPPP). The span at 316–326 (PSTVSTATPPA) shows a compositional bias: low complexity. The interval 316 to 342 (PSTVSTATPPASNVPYVPTTTGNQLKY) is disordered. Positions 333-342 (PTTTGNQLKY) are enriched in polar residues.

Belongs to the muscleblind family.

The protein resides in the nucleus. The protein localises to the cytoplasm. In terms of biological role, mediates pre-mRNA alternative splicing regulation. Acts either as activator or repressor of splicing on specific pre-mRNA targets. Inhibits cardiac troponin-T (TNNT2) pre-mRNA exon inclusion but induces insulin receptor (IR) pre-mRNA exon inclusion in muscle. Antagonizes the alternative splicing activity pattern of CELF proteins. Could inhibit terminal muscle differentiation, acting at approximately the time of myogenin induction. The sequence is that of Muscleblind-like protein 3 (Mbnl3) from Mus musculus (Mouse).